We begin with the raw amino-acid sequence, 118 residues long: Late cornified envelope protein 1E (118 aa).

Over residues 1 to 10 the composition is skewed to low complexity; the sequence is MSCQQSQQQC. Disordered regions lie at residues 1 to 23 and 84 to 118; these read MSCQQSQQQCQPPPKCTPKCPPK and RSHRHRPQSSDCCSQPSGGSSCCGGGSGQHSGGCC. The segment covering 11–23 has biased composition (pro residues); sequence QPPPKCTPKCPPK. Positions 92–103 are enriched in low complexity; it reads SSDCCSQPSGGS. Residues 104-118 show a composition bias toward gly residues; it reads SCCGGGSGQHSGGCC.

The protein belongs to the LCE family. In terms of assembly, interacts with CYSRT1. Skin-specific. Expression was readily detected in adult trunk skin, adult arm skin, fetal skin, penal skin, vulva, esophagus and tongue. Not expressed in the cervix, rectum, lung, colon, or placenta.

Its function is as follows. Precursors of the cornified envelope of the stratum corneum. This Homo sapiens (Human) protein is Late cornified envelope protein 1E (LCE1E).